The sequence spans 931 residues: Beta-mannosidase A (931 aa).

An N-terminal signal peptide occupies residues 1-21 (MRHSIGLAAALLAPTLPVALG). 5 N-linked (GlcNAc...) asparagine glycosylation sites follow: N40, N79, N247, N282, and N347. Residue E479 is the Proton donor of the active site. N550, N608, N658, N738, N790, N798, N830, and N918 each carry an N-linked (GlcNAc...) asparagine glycan.

It belongs to the glycosyl hydrolase 2 family. Beta-mannosidase A subfamily. Homodimer. N-glycosylated.

The protein localises to the secreted. It carries out the reaction Hydrolysis of terminal, non-reducing beta-D-mannose residues in beta-D-mannosides.. The protein operates within glycan metabolism; N-glycan degradation. Functionally, exoglycosidase that cleaves the single beta-linked mannose residue from the non-reducing end of beta-mannosidic oligosaccharides of various complexity and length. Involved in the degradation of polymeric mannan and galactomannan. Releases the terminal mannose residue from mannobiose and mannotriose, as well as from galactosyl-mannobiose (GM2), galactosyl-mannotriose (GM3) and di-galactosyl-mannopentaose (G2M5). This Aspergillus niger protein is Beta-mannosidase A (mndA).